A 99-amino-acid polypeptide reads, in one-letter code: Protein dpy-30 homolog (99 aa).

Methionine 1 is modified (N-acetylmethionine). A disordered region spans residues 1 to 26; it reads MEPEQMLEGQTQVAENPHSEYGLTDN. Serine 19 is subject to Phosphoserine. Lysine 35 is modified (N6-acetyllysine; alternate). A Glycyl lysine isopeptide (Lys-Gly) (interchain with G-Cter in SUMO2); alternate cross-link involves residue lysine 35.

The protein belongs to the dpy-30 family. As to quaternary structure, homodimer. Core component of several methyltransferase-containing complexes including MLL1/MLL, MLL2/3 (also named ASCOM complex) and MLL4/WBP7. Each complex is at least composed of ASH2L, RBBP5, WDR5, DPY30, one or more specific histone methyltransferases (KMT2A/MLL1, KMT2D/MLL2, KMT2C/MLL3 and KMT2B/MLL4), and the facultative components MEN1, HCFC1, HCFC2, NCOA6, KDM6A, PAXIP1/PTIP, PAGR1 and alpha- and beta-tubulin. Interacts with ASH2L; the interaction is direct. Interacts with ARFGEF1. Component of the SET1 complex, at least composed of the catalytic subunit (SETD1A or SETD1B), WDR5, WDR82, RBBP5, ASH2L/ASH2, CXXC1/CFP1, HCFC1 and DPY30.

It is found in the nucleus. Its subcellular location is the golgi apparatus. The protein resides in the trans-Golgi network. In terms of biological role, as part of the MLL1/MLL complex, involved in the methylation of histone H3 at 'Lys-4', particularly trimethylation. Histone H3 'Lys-4' methylation represents a specific tag for epigenetic transcriptional activation. May play some role in histone H3 acetylation. In embryonic stem cells, may play a crucial role in retinoic acid-induced differentiation along the neural lineage, regulating gene induction and H3 'Lys-4' methylation at key developmental loci. May also play an indirect or direct role in endosomal transport. The chain is Protein dpy-30 homolog (DPY30) from Bos taurus (Bovine).